The chain runs to 272 residues: D-aminoacyl-tRNA deacylase (272 aa).

The protein belongs to the DtdA deacylase family. Monomer. Zn(2+) is required as a cofactor.

The catalysed reaction is a D-aminoacyl-tRNA + H2O = a tRNA + a D-alpha-amino acid + H(+). It carries out the reaction glycyl-tRNA(Ala) + H2O = tRNA(Ala) + glycine + H(+). In terms of biological role, D-aminoacyl-tRNA deacylase with broad substrate specificity. By recycling D-aminoacyl-tRNA to D-amino acids and free tRNA molecules, this enzyme counteracts the toxicity associated with the formation of D-aminoacyl-tRNA entities in vivo. This is D-aminoacyl-tRNA deacylase from Thermococcus onnurineus (strain NA1).